A 266-amino-acid chain; its full sequence is Energy-coupling factor transporter ATP-binding protein EcfA1 (266 aa).

The ABC transporter domain maps to 2-237 (IKLNNVTFRY…EKIIEIAKIA (236 aa)). 37 to 44 (GHNGSGKS) is an ATP binding site.

This sequence belongs to the ABC transporter superfamily. Energy-coupling factor EcfA family. As to quaternary structure, forms a stable energy-coupling factor (ECF) transporter complex composed of 2 membrane-embedded substrate-binding proteins (S component), 2 ATP-binding proteins (A component) and 2 transmembrane proteins (T component).

It localises to the cell membrane. ATP-binding (A) component of a common energy-coupling factor (ECF) ABC-transporter complex. Unlike classic ABC transporters this ECF transporter provides the energy necessary to transport a number of different substrates. The polypeptide is Energy-coupling factor transporter ATP-binding protein EcfA1 (Mycoplasmopsis synoviae (strain 53) (Mycoplasma synoviae)).